The sequence spans 678 residues: Glycine--tRNA ligase beta subunit (678 aa).

The protein belongs to the class-II aminoacyl-tRNA synthetase family. Tetramer of two alpha and two beta subunits.

The protein localises to the cytoplasm. The catalysed reaction is tRNA(Gly) + glycine + ATP = glycyl-tRNA(Gly) + AMP + diphosphate. The protein is Glycine--tRNA ligase beta subunit of Streptococcus pneumoniae serotype 19F (strain G54).